Here is a 41-residue protein sequence, read N- to C-terminus: Cytochrome b559 subunit beta (41 aa).

A helical membrane pass occupies residues 16 to 32 (WLAVHALAIPTVFFLGS). Histidine 20 lines the heme pocket.

This sequence belongs to the PsbE/PsbF family. In terms of assembly, heterodimer of an alpha subunit and a beta subunit. PSII is composed of 1 copy each of membrane proteins PsbA, PsbB, PsbC, PsbD, PsbE, PsbF, PsbH, PsbI, PsbJ, PsbK, PsbL, PsbM, PsbT, PsbY, PsbZ, Psb30/Ycf12, at least 3 peripheral proteins of the oxygen-evolving complex and a large number of cofactors. It forms dimeric complexes. The cofactor is heme b.

The protein resides in the plastid. The protein localises to the chloroplast thylakoid membrane. In terms of biological role, this b-type cytochrome is tightly associated with the reaction center of photosystem II (PSII). PSII is a light-driven water:plastoquinone oxidoreductase that uses light energy to abstract electrons from H(2)O, generating O(2) and a proton gradient subsequently used for ATP formation. It consists of a core antenna complex that captures photons, and an electron transfer chain that converts photonic excitation into a charge separation. In Euglena gracilis, this protein is Cytochrome b559 subunit beta.